The primary structure comprises 255 residues: Zinc D-Ala-D-Ala carboxypeptidase (255 aa).

An N-terminal signal peptide occupies residues 1–42; that stretch reads MRPRPIRLLLTALVGAGLAFAPVSAVAAPTATASASADVGAL. Asp43 bears the Blocked amino end (Asp) mark. Disulfide bonds link Cys45/Cys123 and Cys136/Cys184. Arg180 is a substrate binding site. Residue His196 participates in Zn(2+) binding. Cys212 and Cys253 are joined by a disulfide. His234 (proton donor) is an active-site residue. Residues His237 and His239 each coordinate Zn(2+).

Belongs to the peptidase M15 family. The cofactor is Zn(2+). The N-terminus is partially blocked as a result of the cyclization of the first two amino acids into anhydroaspartylglycine imide.

It localises to the secreted. The enzyme catalyses Cleavage of the bond: (Ac)2-L-lysyl-D-alanyl-|-D-alanine.. In terms of biological role, this enzyme catalyzes carboxypeptidation and transpeptidation reactions involved in bacterial cell wall metabolism. It effectively catalyzes the transfer of the N-alpha, N-epsilon-diacetyl-L-lysyl-D-alanyl electrophilic group of the standard tripeptide substrate N-alpha,N-epsilon-diacetyl-L-lysyl-D-alanyl-D-alanine to water. It also performs a weak beta-lactamase activity, hydrolyzing penicillin into penicilloate at a very low rate. In Streptomyces albus G, this protein is Zinc D-Ala-D-Ala carboxypeptidase.